A 210-amino-acid polypeptide reads, in one-letter code: Orotate phosphoribosyltransferase (210 aa).

Residues Arg-96, Lys-100, His-102, and 122–130 contribute to the 5-phospho-alpha-D-ribose 1-diphosphate site; that span reads EDLISTGGS. Orotate is bound at residue Ser-126.

Belongs to the purine/pyrimidine phosphoribosyltransferase family. PyrE subfamily. As to quaternary structure, homodimer. It depends on Mg(2+) as a cofactor.

It catalyses the reaction orotidine 5'-phosphate + diphosphate = orotate + 5-phospho-alpha-D-ribose 1-diphosphate. It functions in the pathway pyrimidine metabolism; UMP biosynthesis via de novo pathway; UMP from orotate: step 1/2. In terms of biological role, catalyzes the transfer of a ribosyl phosphate group from 5-phosphoribose 1-diphosphate to orotate, leading to the formation of orotidine monophosphate (OMP). The chain is Orotate phosphoribosyltransferase from Streptococcus pneumoniae (strain ATCC BAA-255 / R6).